The primary structure comprises 175 residues: ATP-dependent protease subunit HslV (175 aa).

Thr2 is an active-site residue. Residues Gly157, Cys160, and Thr163 each contribute to the Na(+) site.

The protein belongs to the peptidase T1B family. HslV subfamily. A double ring-shaped homohexamer of HslV is capped on each side by a ring-shaped HslU homohexamer. The assembly of the HslU/HslV complex is dependent on binding of ATP.

It localises to the cytoplasm. The catalysed reaction is ATP-dependent cleavage of peptide bonds with broad specificity.. With respect to regulation, allosterically activated by HslU binding. Its function is as follows. Protease subunit of a proteasome-like degradation complex believed to be a general protein degrading machinery. This is ATP-dependent protease subunit HslV from Photobacterium profundum (strain SS9).